Here is a 388-residue protein sequence, read N- to C-terminus: F-box protein ETP2 (388 aa).

An F-box domain is found at Lys-2–Lys-48.

In terms of assembly, interacts with EIN2 (via C-terminus).

In terms of biological role, negative regulator of EIN2 protein stability. This chain is F-box protein ETP2, found in Arabidopsis thaliana (Mouse-ear cress).